The following is a 475-amino-acid chain: 3-isopropylmalate dehydratase large subunit (475 aa).

[4Fe-4S] cluster contacts are provided by Cys-352, Cys-412, and Cys-415.

Belongs to the aconitase/IPM isomerase family. LeuC type 1 subfamily. In terms of assembly, heterodimer of LeuC and LeuD. [4Fe-4S] cluster is required as a cofactor.

The catalysed reaction is (2R,3S)-3-isopropylmalate = (2S)-2-isopropylmalate. It functions in the pathway amino-acid biosynthesis; L-leucine biosynthesis; L-leucine from 3-methyl-2-oxobutanoate: step 2/4. Catalyzes the isomerization between 2-isopropylmalate and 3-isopropylmalate, via the formation of 2-isopropylmaleate. The sequence is that of 3-isopropylmalate dehydratase large subunit from Gluconobacter oxydans (strain 621H) (Gluconobacter suboxydans).